Consider the following 60-residue polypeptide: Large ribosomal subunit protein bL32 (60 aa).

This sequence belongs to the bacterial ribosomal protein bL32 family.

In Pseudothermotoga lettingae (strain ATCC BAA-301 / DSM 14385 / NBRC 107922 / TMO) (Thermotoga lettingae), this protein is Large ribosomal subunit protein bL32.